We begin with the raw amino-acid sequence, 267 residues long: 27 kDa core protein (267 aa).

This sequence belongs to the chordopoxvirinae D3 family.

The protein resides in the virion. In terms of biological role, late protein which is part of a large complex required for early virion morphogenesis. This complex participates in the formation of virosomes and the incorporation of virosomal contents into nascent immature virions. The polypeptide is 27 kDa core protein (Canarypox virus (CNPV)).